The chain runs to 631 residues: PTS system glucosamine-specific EIICBA component (631 aa).

The region spanning 3–382 (KKAFQILQQL…WNLKTPGRET (380 aa)) is the PTS EIIC type-1 domain. The next 8 membrane-spanning stretches (helical) occupy residues 12–32 (LGRA…LLRF), 56–76 (LIFA…AGLA), 106–126 (HLID…AYLY), 149–169 (IITS…WPLI), 196–216 (LLIP…MMGE), 243–263 (FMMG…LAII), 298–318 (FLFV…VIFV), and 350–370 (VVIP…RFAI). Residues 397-478 (DQLAFHVLQA…KTIMAGGVPA (82 aa)) form the PTS EIIB type-1 domain. Residue C419 is the Phosphocysteine intermediate; for EIIB activity of the active site. C419 is modified (phosphocysteine). The PTS EIIA type-1 domain occupies 515-619 (DQVFSEKMMG…SAITPVIFTN (105 aa)). H567 (tele-phosphohistidine intermediate; for EIIA activity) is an active-site residue. The residue at position 567 (H567) is a Phosphohistidine.

The protein localises to the cell membrane. It catalyses the reaction D-glucosamine(out) + N(pros)-phospho-L-histidyl-[protein] = D-glucosamine 6-phosphate(in) + L-histidyl-[protein]. Its function is as follows. The phosphoenolpyruvate-dependent sugar phosphotransferase system (sugar PTS), a major carbohydrate active transport system, catalyzes the phosphorylation of incoming sugar substrates concomitantly with their translocation across the cell membrane. This system is involved in glucosamine transport. In vitro, when expressed in the absence of GamR and NagP, can transport N-acetylglucosamine. In addition, plays an important role in the phosphorylation of EIIA-deficient PTS transporters. The EIIA domain can transfer a phosphoryl group to EIIA-deficient PTS transporters, enabling growth with maltose, N-acetylglucosamine, sucrose or trehalose as the sole carbon source. In Bacillus subtilis (strain 168), this protein is PTS system glucosamine-specific EIICBA component.